Reading from the N-terminus, the 200-residue chain is NADH-quinone oxidoreductase subunit B (200 aa).

Residues Cys78, Cys79, Cys144, and Cys174 each contribute to the [4Fe-4S] cluster site.

This sequence belongs to the complex I 20 kDa subunit family. NDH-1 is composed of 14 different subunits. Subunits NuoB, C, D, E, F, and G constitute the peripheral sector of the complex. The cofactor is [4Fe-4S] cluster.

It is found in the cell membrane. It carries out the reaction a quinone + NADH + 5 H(+)(in) = a quinol + NAD(+) + 4 H(+)(out). NDH-1 shuttles electrons from NADH, via FMN and iron-sulfur (Fe-S) centers, to quinones in the respiratory chain. The immediate electron acceptor for the enzyme in this species is believed to be ubiquinone. Couples the redox reaction to proton translocation (for every two electrons transferred, four hydrogen ions are translocated across the cytoplasmic membrane), and thus conserves the redox energy in a proton gradient. This is NADH-quinone oxidoreductase subunit B from Dehalococcoides mccartyi (strain ATCC BAA-2100 / JCM 16839 / KCTC 5957 / BAV1).